The sequence spans 874 residues: Alanine--tRNA ligase (874 aa).

Residues His562, His566, Cys664, and His668 each contribute to the Zn(2+) site.

Belongs to the class-II aminoacyl-tRNA synthetase family. The cofactor is Zn(2+).

It is found in the cytoplasm. It carries out the reaction tRNA(Ala) + L-alanine + ATP = L-alanyl-tRNA(Ala) + AMP + diphosphate. Its function is as follows. Catalyzes the attachment of alanine to tRNA(Ala) in a two-step reaction: alanine is first activated by ATP to form Ala-AMP and then transferred to the acceptor end of tRNA(Ala). Also edits incorrectly charged Ser-tRNA(Ala) and Gly-tRNA(Ala) via its editing domain. This chain is Alanine--tRNA ligase, found in Shewanella putrefaciens (strain CN-32 / ATCC BAA-453).